Consider the following 541-residue polypeptide: Membrane protein insertase YidC (541 aa).

6 consecutive transmembrane segments (helical) span residues 7-27 (FLIV…GVTH), 289-309 (YLLT…VTLP), 356-376 (IIHS…LAFY), 430-450 (LPIL…LEMV), 463-483 (LSAQ…MFAQ), and 498-518 (IMMA…SGLV).

Belongs to the OXA1/ALB3/YidC family. Type 1 subfamily. In terms of assembly, interacts with the Sec translocase complex via SecD. Specifically interacts with transmembrane segments of nascent integral membrane proteins during membrane integration.

It localises to the cell inner membrane. Functionally, required for the insertion and/or proper folding and/or complex formation of integral membrane proteins into the membrane. Involved in integration of membrane proteins that insert both dependently and independently of the Sec translocase complex, as well as at least some lipoproteins. Aids folding of multispanning membrane proteins. In Ruthia magnifica subsp. Calyptogena magnifica, this protein is Membrane protein insertase YidC.